The primary structure comprises 276 residues: 4-deoxy-L-threo-5-hexosulose-uronate ketol-isomerase (276 aa).

Positions 194, 196, 201, and 243 each coordinate Zn(2+).

It belongs to the KduI family. The cofactor is Zn(2+).

The catalysed reaction is 5-dehydro-4-deoxy-D-glucuronate = 3-deoxy-D-glycero-2,5-hexodiulosonate. The protein operates within glycan metabolism; pectin degradation; 2-dehydro-3-deoxy-D-gluconate from pectin: step 4/5. Functionally, catalyzes the isomerization of 5-dehydro-4-deoxy-D-glucuronate to 3-deoxy-D-glycero-2,5-hexodiulosonate. The chain is 4-deoxy-L-threo-5-hexosulose-uronate ketol-isomerase from Lachnoclostridium phytofermentans (strain ATCC 700394 / DSM 18823 / ISDg) (Clostridium phytofermentans).